Consider the following 742-residue polypeptide: Non-structural protein 1 (742 aa).

Disordered regions lie at residues 14-46 (SAMS…SSTA) and 230-268 (LMSL…RPSH). 2 stretches are compositionally biased toward low complexity: residues 20 to 46 (PSLT…SSTA) and 238 to 258 (PPRS…PRLP). Positions 635-700 (DLTAQLAIAE…HSAATAEAAA (66 aa)) form a coiled coil.

Belongs to the aquareoviridae NS1 protein family.

Functionally, non-structural protein with ssRNA-binding activity. Is probably involved in the formation of viral inclusions, where the assembly of cores and the replication of viral RNA are thought to occur. The protein is Non-structural protein 1 (S4) of Aquareovirus C (isolate Golden shiner/USA/GSRV/1977) (AQRV-C).